A 200-amino-acid chain; its full sequence is Glutathione S-transferase 1-1 (200 aa).

Residues 1 to 73 (GSSPCRSVIM…YLVEKYGKTD (73 aa)) enclose the GST N-terminal domain. Glutathione contacts are provided by residues Ser2, 43-45 (HTI), and 57-59 (ESR). Residues 79–200 (CPKKRAVINQ…AGCLEFKKFF (122 aa)) form the GST C-terminal domain.

This sequence belongs to the GST superfamily. Theta family. As to quaternary structure, homodimer.

It carries out the reaction RX + glutathione = an S-substituted glutathione + a halide anion + H(+). It catalyses the reaction 1,1,1-trichloro-2,2-bis(4-chlorophenyl)ethane = 1,1-dichloro-2,2-bis(4-chlorophenyl)ethylene + chloride + H(+). Functionally, conjugation of reduced glutathione to a wide number of exogenous and endogenous hydrophobic electrophiles. Has DDT dehydrochlorinase activity. The sequence is that of Glutathione S-transferase 1-1 (GstD1) from Drosophila mauritiana (Fruit fly).